The chain runs to 105 residues: Urease subunit beta (105 aa).

This sequence belongs to the urease beta subunit family. As to quaternary structure, heterotrimer of UreA (gamma), UreB (beta) and UreC (alpha) subunits. Three heterotrimers associate to form the active enzyme.

The protein localises to the cytoplasm. The enzyme catalyses urea + 2 H2O + H(+) = hydrogencarbonate + 2 NH4(+). It functions in the pathway nitrogen metabolism; urea degradation; CO(2) and NH(3) from urea (urease route): step 1/1. In Pseudomonas putida (strain W619), this protein is Urease subunit beta.